The sequence spans 85 residues: Turmerin (85 aa).

The N-terminus is blocked.

Functionally, inhibition of trypsin. Has anticarcinogenic activity, prevents transformation of DMBA-treated JB6 cells. Has antipromoter activity, prevents promotion by tetradecanoyl phorbal acetate (TPA) in JB6 cells. Prevents tertiary butyl hydroperoxide-induced mutagenesis. Protects AT base pairs and shows antimutagenesis activity in TA102 and TA104 S.typhimurium mutagenesis tests. Inhibits paw edema formation induced by phospholipase A2 in Swiss Wistar mice. Prevents the release of arachidonate, the parent compound for the synthesis of prostaglandins and prostacyclins. Has antimalarial activity, kills P.falciparum. Has antivenom activity, nullifies the lethal effects of N.naja venom and inhibits phospholipase A2 present in N.naja venom. Has antifungal activity, inhibits cilia formation by A.niger. Is not toxic or allergenic. In Curcuma longa (Turmeric), this protein is Turmerin.